The following is a 378-amino-acid chain: UPF0725 protein At1g23970 (378 aa).

It belongs to the UPF0725 (EMB2204) family.

The sequence is that of UPF0725 protein At1g23970 from Arabidopsis thaliana (Mouse-ear cress).